The following is a 323-amino-acid chain: tRNA N6-adenosine threonylcarbamoyltransferase (323 aa).

The Fe cation site is built by histidine 105, histidine 109, and tyrosine 126. Substrate is bound by residues 126-130, aspartate 158, glycine 171, glutamate 175, and asparagine 255; that span reads YVSGG. Aspartate 283 lines the Fe cation pocket.

The protein belongs to the KAE1 / TsaD family. Monomer. Component of the KEOPS complex that consists of Kae1, Bud32, Cgi121 and Pcc1; the whole complex dimerizes. It depends on Fe(2+) as a cofactor.

The protein resides in the cytoplasm. It carries out the reaction L-threonylcarbamoyladenylate + adenosine(37) in tRNA = N(6)-L-threonylcarbamoyladenosine(37) in tRNA + AMP + H(+). Required for the formation of a threonylcarbamoyl group on adenosine at position 37 (t(6)A37) in tRNAs that read codons beginning with adenine. Is a component of the KEOPS complex that is probably involved in the transfer of the threonylcarbamoyl moiety of threonylcarbamoyl-AMP (TC-AMP) to the N6 group of A37. Kae1 likely plays a direct catalytic role in this reaction, but requires other protein(s) of the complex to fulfill this activity. The chain is tRNA N6-adenosine threonylcarbamoyltransferase from Archaeoglobus fulgidus (strain ATCC 49558 / DSM 4304 / JCM 9628 / NBRC 100126 / VC-16).